Here is a 118-residue protein sequence, read N- to C-terminus: uncharacterized protein (118 aa).

A signal peptide spans 1–26 (MTKLKMLSMLTVMIASLFIFSSQALA). The SH3b domain occupies 30–104 (FTVSTSSGAP…VNIGYVSDTY (75 aa)).

It to B.subtilis YraI.

This is an uncharacterized protein from Bacillus subtilis (strain 168).